Consider the following 213-residue polypeptide: High frequency lysogenization protein HflD homolog (213 aa).

Residues 79–122 are a coiled coil; that stretch reads QGLNAELTRYTLSLMVLERKLSSAKGALNTLGDRINGLQRQLDH.

This sequence belongs to the HflD family.

It is found in the cytoplasm. The protein localises to the cell inner membrane. The chain is High frequency lysogenization protein HflD homolog from Salmonella dublin (strain CT_02021853).